We begin with the raw amino-acid sequence, 614 residues long: MRTLMIHSDYLRYKTRSKTKIAEDIDDEKRVSGVDEALVAFIAVEKEDEENPELIINKAVKEILNVQNKVNAENIVIYPYAHLSSSLSNPDIAQKILKGIEAELLDNNEAVLRVPFGWYKSFELSCKGHPLSELSRTITTEPEEESEDSEEEPSEPSKMFILEEDGNIFDVEEYNYKNKTLRQLVDHEEGKTKDTGKQPPHVRLMREKELASNEPAADVGHIRWYPKGKLVKDLLSDYVYQLVTQRGAMPVETPVMYDLANPAIREHAEKFGERQYRLKTKHRELMLRFACCFGAFRILADSFLTWKNMPVGIYELSTFSFRFERQGEVVGLKRLRAFTMPDFHSVCLNDDHAREVFANQVDMCAQTETDLDVHYEVAFRVTQDFFDENEDWIKEVVKNNIKKPVLLEVIPKMKHYWNAKVDFAAIDDLGRPIENPTVQMDIQSAKRFGITYLDENEEQQYPTILHCSPTGSIERVICSLLEKTSTDKGNKPSLPLWLAPTQVRIIPVTDNHLDYAKEIYQQIRDSNIRVDIDDTAERVGKKIRNAGKEWIPYTIVVGDNEVENNSISVNRRVDNTKEEISIEDLAEEIHTLTKDMPFRQLPLPYMVSKRVKFD.

The interval 1–138 (MRTLMIHSDY…HPLSELSRTI (138 aa)) is editing domain. A disordered region spans residues 133–157 (ELSRTITTEPEEESEDSEEEPSEPS). The span at 141–154 (EPEEESEDSEEEPS) shows a compositional bias: acidic residues. The segment at 200-495 (PHVRLMREKE…TDKGNKPSLP (296 aa)) is catalytic. Residues Cys-292, His-344, and His-466 each contribute to the Zn(2+) site.

It belongs to the class-II aminoacyl-tRNA synthetase family. Homodimer. The cofactor is Zn(2+).

Its subcellular location is the cytoplasm. It carries out the reaction tRNA(Thr) + L-threonine + ATP = L-threonyl-tRNA(Thr) + AMP + diphosphate + H(+). Catalyzes the attachment of threonine to tRNA(Thr) in a two-step reaction: L-threonine is first activated by ATP to form Thr-AMP and then transferred to the acceptor end of tRNA(Thr). Also edits incorrectly charged L-seryl-tRNA(Thr). This Methanosphaera stadtmanae (strain ATCC 43021 / DSM 3091 / JCM 11832 / MCB-3) protein is Threonine--tRNA ligase.